Reading from the N-terminus, the 333-residue chain is Alpha-N-acetylgalactosaminide alpha-2,6-sialyltransferase 6 (333 aa).

The segment covering 1 to 12 (MACSRPPSQCDP) has biased composition (polar residues). Residues 1 to 27 (MACSRPPSQCDPTTLPPGPPAGRWPLP) form a disordered region. The Cytoplasmic segment spans residues 1–43 (MACSRPPSQCDPTTLPPGPPAGRWPLPFSRRRREMSSNKEQRS). The chain crosses the membrane as a helical; Signal-anchor for type II membrane protein span at residues 44-64 (AVFVILFALITILILYSSNSA). The Lumenal portion of the chain corresponds to 65–333 (NEVFHYGSLR…GITFSHPSWT (269 aa)). N98 is a glycosylation site (N-linked (GlcNAc...) asparagine). C108 and C256 form a disulfide bridge.

It belongs to the glycosyltransferase 29 family. As to expression, widely expressed, the gene expression is most abundant in colon, brain, liver, and heart.

It localises to the golgi apparatus membrane. The catalysed reaction is a ganglioside GM1b (d18:1(4E)) + CMP-N-acetyl-beta-neuraminate = a ganglioside GD1alpha (d18:1(4E)) + CMP + H(+). The enzyme catalyses a ganglioside GD1a (d18:1(4E)) + CMP-N-acetyl-beta-neuraminate = a ganglioside GT1aalpha (d18:1(4E)) + CMP + H(+). It carries out the reaction a ganglioside GT1b (d18:1(4E)) + CMP-N-acetyl-beta-neuraminate = a ganglioside GQ1balpha (d18:1(4E)) + CMP + H(+). It catalyses the reaction N-acetyl-alpha-neuraminosyl-(2-&gt;3)-beta-D-galactosyl-(1-&gt;3)-N-acetyl-beta-D-glucosaminyl-(1-&gt;3)-beta-D-galactosyl-(1-&gt;4)-beta-D-glucosyl-(1&lt;-&gt;1')-N-acyl-sphing-4-enine + CMP-N-acetyl-beta-neuraminate = N-acetyl-alpha-neuraminosyl-(2-&gt;3)-beta-D-galactosyl-(1-&gt;3)-[N-acetyl-alpha-neuraminosyl-(2-&gt;6)]-N-acetyl-beta-D-glucosaminyl-(1-&gt;3)-beta-D-galactosyl-(1-&gt;4)-beta-D-glucosyl-(1&lt;-&gt;1')-N-acyl-sphing-4-enine + CMP + H(+). The catalysed reaction is a globoside MSGG + CMP-N-acetyl-beta-neuraminate = a globoside DSGG + CMP + H(+). The enzyme catalyses 3-O-[alpha-Neu5Ac-(2-&gt;3)-beta-D-Gal-(1-&gt;3)-alpha-D-GalNAc]-L-Ser-[protein] + CMP-N-acetyl-beta-neuraminate = a 3-O-{alpha-Neu5Ac-(2-&gt;3)-beta-D-Gal-(1-&gt;3)-[alpha-Neu5Ac-(2-&gt;6)]-alpha-D-GalNAc}-L-seryl-[protein] + CMP + H(+). It carries out the reaction 3-O-[alpha-Neu5Ac-(2-&gt;3)-beta-D-Gal-(1-&gt;3)-alpha-D-GalNAc]-L-Thr-[protein] + CMP-N-acetyl-beta-neuraminate = a 3-O-{alpha-Neu5Ac-(2-&gt;3)-beta-D-Gal-(1-&gt;3)-[alpha-Neu5Ac-(2-&gt;6)]-alpha-D-GalNAc}-L-threonyl-[protein] + CMP + H(+). Transfers the sialyl group (N-acetyl-alpha-neuraminyl or NeuAc) from CMP-NeuAc onto glycolipids, forming an alpha-2,6-linkage. Produces branched type disialyl structures by transfer of a sialyl group onto the GalNAc or GlcNAc residue inside backbone core chains having a terminal sialic acid with an alpha-2,3-linkage on Gal. ST6GalNAcVI prefers glycolipids to glycoproteins, predominantly catalyzing the biosynthesis of ganglioside GD1alpha from GM1b. Also has activity toward GD1a and GT1b, and can generate DSGG (disialylgalactosylgloboside) from MSGG (monosialylgalactosylgloboside). Besides GMb1, MSGG and other glycolipids, it shows activity towards sialyl Lc4Cer generating disialyl Lc4Cer, which can lead to the synthesis of disialyl Lewis a (Le(a)), suggested to be a cancer-associated antigen. The sequence is that of Alpha-N-acetylgalactosaminide alpha-2,6-sialyltransferase 6 (St6galnac6) from Mus musculus (Mouse).